Here is a 209-residue protein sequence, read N- to C-terminus: Transmembrane protein 52 (209 aa).

The signal sequence occupies residues methionine 1–glycine 32. A helical membrane pass occupies residues valine 56–valine 76. A disordered region spans residues alanine 145–proline 209. Residues glutamate 159–glycine 170 are compositionally biased toward basic and acidic residues. A compositionally biased stretch (polar residues) spans leucine 186 to proline 202.

The protein localises to the membrane. This Homo sapiens (Human) protein is Transmembrane protein 52 (TMEM52).